We begin with the raw amino-acid sequence, 531 residues long: Achacin (531 aa).

An N-terminal signal peptide occupies residues 1 to 22 (MLLLNSALFILCLVCWLPGTSS). Positions 23-29 (SRVLTRR) are excised as a propeptide. Residues asparagine 112, asparagine 150, asparagine 308, and asparagine 392 are each glycosylated (N-linked (GlcNAc...) asparagine).

The protein to A.kurodai aplysianin-A. As to quaternary structure, homodimer. As to expression, collar tissue.

Antibacterial glycoprotein. The chain is Achacin from Lissachatina fulica (Giant African land snail).